The primary structure comprises 503 residues: UDP-N-acetylmuramoyl-L-alanyl-D-glutamate--2,6-diaminopimelate ligase (503 aa).

UDP-N-acetyl-alpha-D-muramoyl-L-alanyl-D-glutamate is bound at residue Ser-32. 117–123 is a binding site for ATP; the sequence is GTNGKTT. Residues 159–160, Ser-186, Gln-192, and Arg-194 each bind UDP-N-acetyl-alpha-D-muramoyl-L-alanyl-D-glutamate; that span reads TT. The residue at position 226 (Lys-226) is an N6-carboxylysine. Meso-2,6-diaminopimelate-binding positions include Arg-396, 420–423, Gly-471, and Glu-475; that span reads DNPR. A Meso-diaminopimelate recognition motif motif is present at residues 420 to 423; the sequence is DNPR.

Belongs to the MurCDEF family. MurE subfamily. Mg(2+) serves as cofactor. Carboxylation is probably crucial for Mg(2+) binding and, consequently, for the gamma-phosphate positioning of ATP.

It localises to the cytoplasm. The enzyme catalyses UDP-N-acetyl-alpha-D-muramoyl-L-alanyl-D-glutamate + meso-2,6-diaminopimelate + ATP = UDP-N-acetyl-alpha-D-muramoyl-L-alanyl-gamma-D-glutamyl-meso-2,6-diaminopimelate + ADP + phosphate + H(+). It participates in cell wall biogenesis; peptidoglycan biosynthesis. Catalyzes the addition of meso-diaminopimelic acid to the nucleotide precursor UDP-N-acetylmuramoyl-L-alanyl-D-glutamate (UMAG) in the biosynthesis of bacterial cell-wall peptidoglycan. The protein is UDP-N-acetylmuramoyl-L-alanyl-D-glutamate--2,6-diaminopimelate ligase of Prochlorococcus marinus (strain SARG / CCMP1375 / SS120).